The chain runs to 163 residues: Photosystem II extrinsic protein V (163 aa).

The signal sequence occupies residues 1–26 (MFKKSSQLFSLVFFTIFSIFIGTASA). Heme c is bound by residues Cys-63, Cys-66, His-67, and Met-130.

This sequence belongs to the cytochrome c family. PsbV subfamily. PSII is composed of 1 copy each of membrane proteins PsbA, PsbB, PsbC, PsbD, PsbE, PsbF, PsbH, PsbI, PsbJ, PsbK, PsbL, PsbM, PsbT, PsbY, PsbZ, Psb30/Ycf12, at least 3 peripheral proteins of the oxygen-evolving complex and a large number of cofactors. It forms dimeric complexes. The cofactor is heme c.

Its subcellular location is the plastid. It is found in the chloroplast thylakoid membrane. One of the extrinsic, lumenal subunits of photosystem II (PSII). PSII is a light-driven water plastoquinone oxidoreductase, using light energy to abstract electrons from H(2)O, generating a proton gradient subsequently used for ATP formation. The extrinsic proteins stabilize the structure of photosystem II oxygen-evolving complex (OEC), the ion environment of oxygen evolution and protect the OEC against heat-induced inactivation. This chain is Photosystem II extrinsic protein V, found in Phaeodactylum tricornutum (strain CCAP 1055/1).